Consider the following 89-residue polypeptide: Small ribosomal subunit protein uS15 (89 aa).

This sequence belongs to the universal ribosomal protein uS15 family. In terms of assembly, part of the 30S ribosomal subunit. Forms a bridge to the 50S subunit in the 70S ribosome, contacting the 23S rRNA.

In terms of biological role, one of the primary rRNA binding proteins, it binds directly to 16S rRNA where it helps nucleate assembly of the platform of the 30S subunit by binding and bridging several RNA helices of the 16S rRNA. Forms an intersubunit bridge (bridge B4) with the 23S rRNA of the 50S subunit in the ribosome. In Buchnera aphidicola subsp. Acyrthosiphon pisum (strain 5A), this protein is Small ribosomal subunit protein uS15.